The chain runs to 265 residues: Probable cyclic nucleotide phosphodiesterase SynWH7803_1390 (265 aa).

Aspartate 9, histidine 11, aspartate 49, asparagine 86, histidine 157, histidine 196, and histidine 198 together coordinate Fe cation. Residues histidine 11, aspartate 49, and 86 to 87 (NH) contribute to the AMP site. Histidine 198 is an AMP binding site.

It belongs to the cyclic nucleotide phosphodiesterase class-III family. Fe(2+) serves as cofactor.

The protein is Probable cyclic nucleotide phosphodiesterase SynWH7803_1390 of Synechococcus sp. (strain WH7803).